Consider the following 831-residue polypeptide: Multiphosphoryl transfer protein (831 aa).

Residues methionine 1–serine 90 enclose the HPr domain. Catalysis depends on histidine 15, which acts as the Pros-phosphohistidine intermediate; for HPr activity. Histidine 15 is subject to Phosphohistidine; by EI. Residues glycine 119–aspartate 650 are PTS EI. Catalysis depends on histidine 298, which acts as the Tele-phosphohistidine intermediate; for PTS EI activity. Histidine 298 is modified (phosphohistidine; by autocatalysis). Residues arginine 405 and arginine 441 each coordinate phosphoenolpyruvate. 2 residues coordinate Mg(2+): glutamate 540 and aspartate 564. Residues asparagine 563 to aspartate 564 and arginine 574 each bind phosphoenolpyruvate. The Proton donor; for EI activity role is filled by cysteine 611. In terms of domain architecture, PTS EIIA type-2 spans proline 685 to glutamate 828. Histidine 747 functions as the Tele-phosphohistidine intermediate; for PTS EIIA activity in the catalytic mechanism. Histidine 747 is modified (phosphohistidine; by HPr).

The protein belongs to the PEP-utilizing enzyme family. It depends on Mg(2+) as a cofactor.

It localises to the cytoplasm. The catalysed reaction is L-histidyl-[protein] + phosphoenolpyruvate = N(pros)-phospho-L-histidyl-[protein] + pyruvate. It catalyses the reaction D-fructose(out) + N(pros)-phospho-L-histidyl-[protein] = D-fructose 1-phosphate(in) + L-histidyl-[protein]. Functionally, multifunctional protein that includes general (non sugar-specific) and sugar-specific components of the phosphoenolpyruvate-dependent sugar phosphotransferase system (sugar PTS). This major carbohydrate active transport system catalyzes the phosphorylation of incoming sugar substrates concomitantly with their translocation across the cell membrane. The enzyme II FryABC PTS system is involved in fructose transport. The polypeptide is Multiphosphoryl transfer protein (fryA) (Escherichia coli O157:H7).